Consider the following 682-residue polypeptide: Potassium-transporting ATPase ATP-binding subunit (682 aa).

Helical transmembrane passes span 15 to 35 (AALF…AKLA), 42 to 62 (SPVM…TASG), 66 to 86 (AGFG…GNFA), 233 to 253 (LTFL…GVTL), and 257 to 277 (LLIA…LPAI). Catalysis depends on Asp-310, which acts as the 4-aspartylphosphate intermediate. ATP is bound by residues Asp-347, Glu-351, 377–384 (FTAQTRMS), and Lys-395. The Mg(2+) site is built by Asp-518 and Asp-522. 3 helical membrane-spanning segments follow: residues 588 to 608 (FAIL…LNVM), 616 to 636 (AVLA…PLAL), and 662 to 682 (VLLP…VLGA).

This sequence belongs to the cation transport ATPase (P-type) (TC 3.A.3) family. Type IA subfamily. The system is composed of three essential subunits: KdpA, KdpB and KdpC.

It is found in the cell inner membrane. The enzyme catalyses K(+)(out) + ATP + H2O = K(+)(in) + ADP + phosphate + H(+). Functionally, part of the high-affinity ATP-driven potassium transport (or Kdp) system, which catalyzes the hydrolysis of ATP coupled with the electrogenic transport of potassium into the cytoplasm. This subunit is responsible for energy coupling to the transport system and for the release of the potassium ions to the cytoplasm. The polypeptide is Potassium-transporting ATPase ATP-binding subunit (Xanthomonas axonopodis pv. citri (strain 306)).